The following is a 455-amino-acid chain: Ribulose bisphosphate carboxylase large chain (455 aa).

Lysine 5 is modified (N6,N6,N6-trimethyllysine). Residues asparagine 114 and threonine 164 each coordinate substrate. The Proton acceptor role is filled by lysine 166. Lysine 168 is a substrate binding site. Residues lysine 192, aspartate 194, and glutamate 195 each coordinate Mg(2+). At lysine 192 the chain carries N6-carboxylysine. Histidine 285 functions as the Proton acceptor in the catalytic mechanism. Substrate is bound by residues arginine 286, histidine 318, and serine 370.

This sequence belongs to the RuBisCO large chain family. Type I subfamily. As to quaternary structure, heterohexadecamer of 8 large chains and 8 small chains; disulfide-linked. The disulfide link is formed within the large subunit homodimers. Mg(2+) is required as a cofactor. In terms of processing, the disulfide bond which can form in the large chain dimeric partners within the hexadecamer appears to be associated with oxidative stress and protein turnover.

The protein resides in the plastid. It is found in the chloroplast. The catalysed reaction is 2 (2R)-3-phosphoglycerate + 2 H(+) = D-ribulose 1,5-bisphosphate + CO2 + H2O. It catalyses the reaction D-ribulose 1,5-bisphosphate + O2 = 2-phosphoglycolate + (2R)-3-phosphoglycerate + 2 H(+). Functionally, ruBisCO catalyzes two reactions: the carboxylation of D-ribulose 1,5-bisphosphate, the primary event in carbon dioxide fixation, as well as the oxidative fragmentation of the pentose substrate in the photorespiration process. Both reactions occur simultaneously and in competition at the same active site. This is Ribulose bisphosphate carboxylase large chain from Brownea coccinea (Rose of Venezuela).